The following is a 186-amino-acid chain: Ribosome-recycling factor (186 aa).

The protein belongs to the RRF family.

It localises to the cytoplasm. In terms of biological role, responsible for the release of ribosomes from messenger RNA at the termination of protein biosynthesis. May increase the efficiency of translation by recycling ribosomes from one round of translation to another. The protein is Ribosome-recycling factor of Chlorobium phaeobacteroides (strain BS1).